Reading from the N-terminus, the 601-residue chain is Proline--tRNA ligase (601 aa).

Belongs to the class-II aminoacyl-tRNA synthetase family. ProS type 1 subfamily. As to quaternary structure, homodimer.

The protein resides in the cytoplasm. The enzyme catalyses tRNA(Pro) + L-proline + ATP = L-prolyl-tRNA(Pro) + AMP + diphosphate. Catalyzes the attachment of proline to tRNA(Pro) in a two-step reaction: proline is first activated by ATP to form Pro-AMP and then transferred to the acceptor end of tRNA(Pro). As ProRS can inadvertently accommodate and process non-cognate amino acids such as alanine and cysteine, to avoid such errors it has two additional distinct editing activities against alanine. One activity is designated as 'pretransfer' editing and involves the tRNA(Pro)-independent hydrolysis of activated Ala-AMP. The other activity is designated 'posttransfer' editing and involves deacylation of mischarged Ala-tRNA(Pro). The misacylated Cys-tRNA(Pro) is not edited by ProRS. The protein is Proline--tRNA ligase of Picosynechococcus sp. (strain ATCC 27264 / PCC 7002 / PR-6) (Agmenellum quadruplicatum).